We begin with the raw amino-acid sequence, 212 residues long: 3-isopropylmalate dehydratase small subunit (212 aa).

It belongs to the LeuD family. LeuD type 1 subfamily. As to quaternary structure, heterodimer of LeuC and LeuD.

It catalyses the reaction (2R,3S)-3-isopropylmalate = (2S)-2-isopropylmalate. Its pathway is amino-acid biosynthesis; L-leucine biosynthesis; L-leucine from 3-methyl-2-oxobutanoate: step 2/4. Its function is as follows. Catalyzes the isomerization between 2-isopropylmalate and 3-isopropylmalate, via the formation of 2-isopropylmaleate. This is 3-isopropylmalate dehydratase small subunit from Pseudomonas aeruginosa (strain LESB58).